The chain runs to 201 residues: Recombination protein RecR (201 aa).

Residues 57–72 form a C4-type zinc finger; the sequence is CCDCRTFTEEERCTIC. Residues 81–176 enclose the Toprim domain; it reads GQICVVESPA…AASRIAHGVP (96 aa).

This sequence belongs to the RecR family.

Its function is as follows. May play a role in DNA repair. It seems to be involved in an RecBC-independent recombinational process of DNA repair. It may act with RecF and RecO. In Proteus mirabilis (strain HI4320), this protein is Recombination protein RecR.